The following is a 360-amino-acid chain: Protein Wnt-2 (360 aa).

The N-terminal stretch at 1 to 25 is a signal peptide; it reads MNAPVGGIWLWLPLLLTWLSPEVSS. 11 disulfides stabilise this stretch: Cys76–Cys87, Cys127–Cys135, Cys137–Cys157, Cys206–Cys220, Cys208–Cys215, Cys278–Cys309, Cys294–Cys304, Cys308–Cys348, Cys324–Cys339, Cys326–Cys336, and Cys331–Cys332. Ser212 carries the O-palmitoleoyl serine; by PORCN lipid modification. Asn295 carries N-linked (GlcNAc...) asparagine glycosylation.

Belongs to the Wnt family. Post-translationally, palmitoleoylation is required for efficient binding to frizzled receptors. Depalmitoleoylation leads to Wnt signaling pathway inhibition.

Its subcellular location is the secreted. The protein resides in the extracellular space. It is found in the extracellular matrix. Functionally, ligand for members of the frizzled family of seven transmembrane receptors. Probable developmental protein. May be a signaling molecule which affects the development of discrete regions of tissues. Is likely to signal over only few cell diameters. This Rhinolophus ferrumequinum (Greater horseshoe bat) protein is Protein Wnt-2 (WNT2).